Reading from the N-terminus, the 1005-residue chain is Vacuolar membrane protease (1005 aa).

Residues 1–14 lie on the Cytoplasmic side of the membrane; that stretch reads MAKETTARSILGYQ. A helical transmembrane segment spans residues 15–35; the sequence is TLPTTALIALIYVVAFFSVLV. The Vacuolar segment spans residues 36 to 353; the sequence is SDQLPSIPHP…PEDSAKQKSK (318 aa). The N-linked (GlcNAc...) asparagine glycan is linked to asparagine 107. Positions 152 and 164 each coordinate Zn(2+). Glutamate 196 (proton acceptor) is an active-site residue. Glutamate 197 is a Zn(2+) binding site. A glycan (N-linked (GlcNAc...) asparagine) is linked at asparagine 213. 2 residues coordinate Zn(2+): glutamate 222 and histidine 311. A helical membrane pass occupies residues 354 to 374; that stretch reads PGVYFDRPVVLALLWAIGAVL. At 375–448 the chain is on the cytoplasmic side; the sequence is KHNAGSPPPP…LITVWKQASF (74 aa). Positions 379–420 are disordered; that stretch reads GSPPPPPKPTVPHSANNASAGTGRPGASTRQPTRSFGSNEDA. Over residues 406–419 the composition is skewed to polar residues; the sequence is STRQPTRSFGSNED. Residues 449–469 traverse the membrane as a helical segment; it reads WIALIVTVGLQALLAWGYVAI. Topologically, residues 470-479 are vacuolar; the sequence is NPFTIYSRPY. A helical transmembrane segment spans residues 480–500; sequence FVLLSFFALSFFSMTLVLQAA. At 501–519 the chain is on the cytoplasmic side; the sequence is FPSSPVKHAIEVREQEKTT. A helical membrane pass occupies residues 520–540; the sequence is ILLHLHLLSWIALLLSTILIG. The Vacuolar portion of the chain corresponds to 541–543; it reads KSQ. Residues 544 to 564 traverse the membrane as a helical segment; the sequence is VGSFYVVTVWYLGIWAATVIG. The Cytoplasmic portion of the chain corresponds to 565 to 644; the sequence is TLQPILVSKR…RKTNSKSKED (80 aa). Positions 577 to 640 are disordered; it reads DKGKRRARRS…ASNRRKTNSK (64 aa). Over residues 588–606 the composition is skewed to low complexity; the sequence is SASTSSSSSSSSSSSSGSD. The chain crosses the membrane as a helical span at residues 645–665; sequence GAIGWWIAQVLLTVPPVVMLV. The Vacuolar segment spans residues 666-686; the sequence is GQITSIVLEAMNQTLTDGNSA. Asparagine 677 carries an N-linked (GlcNAc...) asparagine glycan. The chain crosses the membrane as a helical span at residues 687 to 707; sequence WSIYLLTALLATMLVLPVAPF. At 708-713 the chain is on the cytoplasmic side; it reads SPKLHR. The chain crosses the membrane as a helical span at residues 714–734; it reads GLIFLSAAVFVGFTIYLWVVF. At 735–1005 the chain is on the vacuolar side; it reads PFTRQDPFKV…VEASAPFTVV (271 aa). Residues asparagine 761 and asparagine 961 are each glycosylated (N-linked (GlcNAc...) asparagine).

The protein belongs to the peptidase M28 family. Requires Zn(2+) as cofactor.

It localises to the vacuole membrane. Its function is as follows. May be involved in vacuolar sorting and osmoregulation. This Coprinopsis cinerea (strain Okayama-7 / 130 / ATCC MYA-4618 / FGSC 9003) (Inky cap fungus) protein is Vacuolar membrane protease.